The following is a 186-amino-acid chain: TATA-box-binding protein B (186 aa).

A run of 2 repeats spans residues 10–86 and 101–179.

It belongs to the TBP family.

General factor that plays a role in the activation of archaeal genes transcribed by RNA polymerase. Binds specifically to the TATA box promoter element which lies close to the position of transcription initiation. The protein is TATA-box-binding protein B (tbpB1) of Halobacterium salinarum (strain ATCC 700922 / JCM 11081 / NRC-1) (Halobacterium halobium).